The following is a 336-amino-acid chain: MSQDFWFLLLPGFSVMGFVSAVEPLRVANRFHADLYRWHVLSADGGPVLASNGMSVNSDGALEPLKKGDLLFVVAGFEPLRAVTPALVQWLRKLDRNGVTLGGIDTGSVVLAEAGLLDGRRATLHWEAIDAFQESYPQLSVTQELFEIDGPRITSAGGTASIDLMLDLIAQAHGPQLAVQVSEQFVLGRIRPRQDHQRLQVATRYGVSNRKLVQVIGEMERHTEPPLTTLELAERIQVTRRQLERLFRVHLDDTPSNFYLGLRLDKARQLLRQTDLSVLQVSLACGFESPSYFSRSYRARFAASPSQDRAVLPLKAPAATPPGAPAGHRTPRAERG.

One can recognise an HTH araC/xylS-type domain in the interval 213–311; that stretch reads VQVIGEMERH…AASPSQDRAV (99 aa). 2 consecutive DNA-binding regions (H-T-H motif) follow at residues 230–251 and 278–301; these read LELA…RVHL and VLQV…RARF. The tract at residues 305–336 is disordered; it reads PSQDRAVLPLKAPAATPPGAPAGHRTPRAERG.

Its function is as follows. Induces the transcription of the PA5384-PA5388 operon in response to carnitine. This operon is involved in the degradation of L-carnitine, and allows P.aeruginosa to grow on L-carnitine as the sole source of carbon and nitrogen. The sequence is that of HTH-type transcriptional regulator CdhR (cdhR) from Pseudomonas aeruginosa (strain ATCC 15692 / DSM 22644 / CIP 104116 / JCM 14847 / LMG 12228 / 1C / PRS 101 / PAO1).